Reading from the N-terminus, the 243-residue chain is Pyridoxine 5'-phosphate synthase (243 aa).

3-amino-2-oxopropyl phosphate is bound at residue Asn-9. Residue 11–12 (DH) coordinates 1-deoxy-D-xylulose 5-phosphate. Arg-20 contributes to the 3-amino-2-oxopropyl phosphate binding site. The active-site Proton acceptor is His-45. The 1-deoxy-D-xylulose 5-phosphate site is built by Arg-47 and His-52. Glu-72 serves as the catalytic Proton acceptor. A 1-deoxy-D-xylulose 5-phosphate-binding site is contributed by Thr-102. His-193 acts as the Proton donor in catalysis. Residues Gly-194 and 215–216 (GH) contribute to the 3-amino-2-oxopropyl phosphate site.

Belongs to the PNP synthase family. In terms of assembly, homooctamer; tetramer of dimers.

The protein resides in the cytoplasm. The enzyme catalyses 3-amino-2-oxopropyl phosphate + 1-deoxy-D-xylulose 5-phosphate = pyridoxine 5'-phosphate + phosphate + 2 H2O + H(+). It functions in the pathway cofactor biosynthesis; pyridoxine 5'-phosphate biosynthesis; pyridoxine 5'-phosphate from D-erythrose 4-phosphate: step 5/5. Functionally, catalyzes the complicated ring closure reaction between the two acyclic compounds 1-deoxy-D-xylulose-5-phosphate (DXP) and 3-amino-2-oxopropyl phosphate (1-amino-acetone-3-phosphate or AAP) to form pyridoxine 5'-phosphate (PNP) and inorganic phosphate. In Escherichia coli O6:H1 (strain CFT073 / ATCC 700928 / UPEC), this protein is Pyridoxine 5'-phosphate synthase.